We begin with the raw amino-acid sequence, 156 residues long: MPLLLSGKKFHNDLKKNKCLAMFAPLEGGYETRLLRRMRAKGFKTYITSARGLGDPEVFLLNLHGIRPPHLGHQSIGRNGALGEVQQVIPQASELFNENDKDKLLWLLEGQVLSQSELENLIKLPTADNKLKIVVEMGGSRKLEWKSLNDYVLNEF.

The protein belongs to the complex I NdhN subunit family. NDH-1 can be composed of about 15 different subunits; different subcomplexes with different compositions have been identified which probably have different functions.

The protein localises to the cellular thylakoid membrane. The catalysed reaction is a plastoquinone + NADH + (n+1) H(+)(in) = a plastoquinol + NAD(+) + n H(+)(out). It catalyses the reaction a plastoquinone + NADPH + (n+1) H(+)(in) = a plastoquinol + NADP(+) + n H(+)(out). NDH-1 shuttles electrons from an unknown electron donor, via FMN and iron-sulfur (Fe-S) centers, to quinones in the respiratory and/or the photosynthetic chain. The immediate electron acceptor for the enzyme in this species is believed to be plastoquinone. Couples the redox reaction to proton translocation, and thus conserves the redox energy in a proton gradient. Cyanobacterial NDH-1 also plays a role in inorganic carbon-concentration. The sequence is that of NAD(P)H-quinone oxidoreductase subunit N from Prochlorococcus marinus (strain MIT 9515).